Reading from the N-terminus, the 1406-residue chain is DNA-directed RNA polymerase subunit beta' (1406 aa).

The Zn(2+) site is built by Cys-70, Cys-72, Cys-85, and Cys-88. Residues Asp-460, Asp-462, and Asp-464 each coordinate Mg(2+). Residues Cys-814, Cys-888, Cys-895, and Cys-898 each coordinate Zn(2+).

This sequence belongs to the RNA polymerase beta' chain family. The RNAP catalytic core consists of 2 alpha, 1 beta, 1 beta' and 1 omega subunit. When a sigma factor is associated with the core the holoenzyme is formed, which can initiate transcription. It depends on Mg(2+) as a cofactor. The cofactor is Zn(2+).

The catalysed reaction is RNA(n) + a ribonucleoside 5'-triphosphate = RNA(n+1) + diphosphate. Its function is as follows. DNA-dependent RNA polymerase catalyzes the transcription of DNA into RNA using the four ribonucleoside triphosphates as substrates. This chain is DNA-directed RNA polymerase subunit beta', found in Yersinia enterocolitica serotype O:8 / biotype 1B (strain NCTC 13174 / 8081).